Consider the following 424-residue polypeptide: Glucan endo-1,3-alpha-glucosidase agn1 (424 aa).

Residues 1–20 (MKLVLFLVLLFSALINLTNA) form the signal peptide.

Belongs to the glycosyl hydrolase 71 family. In terms of assembly, monomer. Post-translationally, not glycosylated.

Its subcellular location is the secreted. The protein resides in the cell wall. The catalysed reaction is Endohydrolysis of (1-&gt;3)-alpha-D-glucosidic linkages in isolichenin, pseudonigeran and nigeran.. Its function is as follows. Has a role in cell separation where it is required for the degradation of the cell wall material surrounding the septum (the septum edging) which must be hydrolyzed before full separation of the daughter cells can occur. Hydrolyzes 1,3-alpha-glucan predominantly into pentasaccharides. This is Glucan endo-1,3-alpha-glucosidase agn1 (agn1) from Schizosaccharomyces pombe (strain 972 / ATCC 24843) (Fission yeast).